Reading from the N-terminus, the 170-residue chain is 3-hydroxyanthranilate 3,4-dioxygenase (170 aa).

R44 contacts O2. Fe cation contacts are provided by H48, E54, and H92. E54 lines the substrate pocket. Substrate is bound by residues R96 and E106. A divalent metal cation is bound by residues C121, C124, C158, and C161.

This sequence belongs to the 3-HAO family. It depends on Fe(2+) as a cofactor.

Its subcellular location is the cytoplasm. The enzyme catalyses 3-hydroxyanthranilate + O2 = (2Z,4Z)-2-amino-3-carboxymuconate 6-semialdehyde. It functions in the pathway cofactor biosynthesis; NAD(+) biosynthesis; quinolinate from L-kynurenine: step 3/3. In terms of biological role, catalyzes the oxidative ring opening of 3-hydroxyanthranilate to 2-amino-3-carboxymuconate semialdehyde, which spontaneously cyclizes to quinolinate. This Scheffersomyces stipitis (strain ATCC 58785 / CBS 6054 / NBRC 10063 / NRRL Y-11545) (Yeast) protein is 3-hydroxyanthranilate 3,4-dioxygenase.